A 344-amino-acid chain; its full sequence is L-rhamnose-proton symporter (344 aa).

The next 10 membrane-spanning stretches (helical) occupy residues 4–24 (AITMGIFWHLIGAASAACFYA), 38–58 (WSVGGIVSWIILPWAISALLL), 68–88 (FSLSTLLPVFLFGAMCGIGNI), 101–121 (MGIGIAIGITLIVGTLMTPII), 137–157 (TLLGVLVALIGVGIVTRAGQL), 175–195 (LVLAVMCGIFSAGMSFAMNAA), 214–234 (LPSYVVIMGGGAIINLGFCFI), 259–279 (VLLSTLGGLMWYLQFFFYAWG), 290–310 (ISWMLHMSFYVLCGGIVGLVL), and 323–343 (VLSLGCVVIIVAANIVGIGMA).

It belongs to the L-rhamnose transporter (TC 2.A.7.6) family.

It localises to the cell inner membrane. The catalysed reaction is L-rhamnopyranose(in) + H(+)(in) = L-rhamnopyranose(out) + H(+)(out). Uptake of L-rhamnose across the cytoplasmic membrane with the concomitant transport of protons into the cell (symport system). In Escherichia coli O9:H4 (strain HS), this protein is L-rhamnose-proton symporter.